The sequence spans 337 residues: Cytoskeleton protein RodZ (337 aa).

Residues 1–111 (MNTEATHDQN…LGKRRKKRDG (111 aa)) are Cytoplasmic-facing. The region spanning 19–71 (LRNAREQLGLSQQAVAERLCLKVSTVRDIEEDKAPADLASTFLRGYIRSYARL) is the HTH cro/C1-type domain. Residues 30-49 (QQAVAERLCLKVSTVRDIEE) constitute a DNA-binding region (H-T-H motif). A helical; Signal-anchor for type II membrane protein membrane pass occupies residues 112-132 (WLMTFTWLVLFVVIGLSGAWW). The Periplasmic portion of the chain corresponds to 133–337 (WQDHKAQQEE…TLNAEQSPAQ (205 aa)). A compositionally biased stretch (polar residues) spans 145–167 (TMADQSSAELSSNSEQGQSVPLN). The disordered stretch occupies residues 145–218 (TMADQSSAEL…AVVSPSQANV (74 aa)). Positions 168-207 (TSTTTDPATTSTPPASVDTTATNTQTPAVTAPAPAVDPQQ) are enriched in low complexity. A compositionally biased stretch (polar residues) spans 208-218 (NAVVSPSQANV).

This sequence belongs to the RodZ family.

It is found in the cell inner membrane. Cytoskeletal protein that is involved in cell-shape control through regulation of the length of the long axis. This Shigella flexneri serotype 5b (strain 8401) protein is Cytoskeleton protein RodZ.